Consider the following 245-residue polypeptide: SDSLSFSFINFDQDERNVIAQGDARLSGNNILQLTRTDSDGTPVRSTVGRILYSAQVRLWEKSTNRVANFQTQFSFFLESPLSNPADGIAFFIAPPDTAIPSGSAGGLLGLFSPKTAQNESANQVLAVEFDTFYAQNSNTWDPNYPHIGIDVNSIKSAKTVRWERREGVTLNVLVTYNPSTKTLDVVATYPDGQRYDLSVVVDVTTVLPEWVRVGFSAASGEQFQTHNLESWSFTSTLLYTAQKE.

A carbohydrate-binding residues include Asp-87 and Gly-107. Asn-119 carries N-linked (GlcNAc...) asparagine glycosylation. Glu-129 and Asp-131 together coordinate Mn(2+). The Ca(2+) site is built by Asp-131 and Phe-133. The a carbohydrate site is built by Ser-138 and Asn-139. Residues Asn-139 and Asp-142 each coordinate Ca(2+). Mn(2+) is bound by residues Asp-142 and His-147. A carbohydrate contacts are provided by Gly-221, Glu-222, and Gln-223.

This sequence belongs to the leguminous lectin family. As to quaternary structure, homodimer.

Mannose/glucose-specific lectin that also binds derivatives N-acetyl-D-glucosamine and alpha-methyl-D-mannopyranoside with even higher affinity. Has hemagglutinating activity towards rabbit erythrocytes. Is toxic towards brine shrimp A.nauplii. In rats, induces dose-dependent paw edema. This Centrolobium tomentosum (Arariba) protein is Mannose/glucose-specific lectin.